Consider the following 288-residue polypeptide: Allergen Asp f 7 homolog (288 aa).

The N-terminal stretch at 1-20 (MAPQFLKALTVATALGATLA) is a signal peptide. Composition is skewed to low complexity over residues 48 to 107 (TVHG…SSSV) and 117 to 129 (TTST…TTST). The segment at 48–161 (TVHGTPGPDY…PPVVSIPPIG (114 aa)) is disordered. A compositionally biased stretch (pro residues) spans 130 to 151 (TPPPPPPAMTTPPPPPPPPATK). Asparagine 268 is a glycosylation site (N-linked (GlcNAc...) asparagine).

The protein resides in the secreted. This is Allergen Asp f 7 homolog from Arthroderma benhamiae (strain ATCC MYA-4681 / CBS 112371) (Trichophyton mentagrophytes).